The sequence spans 353 residues: Sphingosine 1-phosphate receptor 2 (353 aa).

The Extracellular portion of the chain corresponds to 1 to 34 (MGSLYSEYLNPNKVQEHYNYTKETLETQETTSRQ). Asn19 carries an N-linked (GlcNAc...) asparagine glycan. The chain crosses the membrane as a helical span at residues 35–59 (VASAFIVILCCAIVVENLLVLIAVA). At 60 to 66 (RNSKFHS) the chain is on the cytoplasmic side. The helical transmembrane segment at 67 to 95 (AMYLFLGNLAASDLLAGVAFVANTLLSGS) threads the bilayer. The Extracellular portion of the chain corresponds to 96 to 109 (VTLRLTPVQWFARE). The chain crosses the membrane as a helical span at residues 110–128 (GSAFITLSASVFSLLAIAI). Topologically, residues 129 to 147 (ERHVAIAKVKLYGSDKSCR) are cytoplasmic. Residues 148–173 (MLLLIGASWLISLVLGGLPILGWNCL) form a helical membrane-spanning segment. The Extracellular portion of the chain corresponds to 174–189 (GHLEACSTVLPLYAKH). Residues 190-210 (YVLCVVTIFSIILLAIVALYV) form a helical membrane-spanning segment. The Cytoplasmic segment spans residues 211 to 233 (RIYCVVRSSHADMAAPQTLALLK). A helical transmembrane segment spans residues 234-255 (TVTIVLGVFIVCWLPAFSILLL). The Extracellular segment spans residues 256-271 (DYACPVHSCPILYKAH). The helical transmembrane segment at 272 to 292 (YFFAVSTLNSLLNPVIYTWRS) threads the bilayer. The Cytoplasmic segment spans residues 293–353 (RDLRREVLRP…PTFLEGNTVV (61 aa)). Cys305 is lipidated: S-palmitoyl cysteine.

Belongs to the G-protein coupled receptor 1 family.

It localises to the cell membrane. Receptor for the lysosphingolipid sphingosine 1-phosphate (S1P). S1P is a bioactive lysophospholipid that elicits diverse physiological effects on most types of cells and tissues. When expressed in rat HTC4 hepatoma cells, is capable of mediating S1P-induced cell proliferation and suppression of apoptosis. Receptor for the chemokine-like protein FAM19A5. Mediates the inhibitory effect of FAM19A5 on vascular smooth muscle cell proliferation and migration. In lymphoid follicles, couples the binding of S1P to the activation of GNA13 and downstream inhibition of AKT activation leading to suppression of germinal center (GC) B cell growth and migration outside the GC niche. In Homo sapiens (Human), this protein is Sphingosine 1-phosphate receptor 2 (S1PR2).